The sequence spans 886 residues: Methanogenesis regulatory histidine kinase FilI (886 aa).

The next 2 helical transmembrane spans lie at 7–27 (ILAFTGGMILVLALICSTFMC) and 270–290 (VVGIFLASLLFGGLILLFLEL). Residues 290 to 344 (LSILMPLATITSSVEAIREQEKGQGSRIPTVGPAELATLAESINEMLDHLESYNQ) enclose the HAMP domain. The PAS domain maps to 349–419 (SEKRFRTIVD…EKDAGVLSGE (71 aa)). One can recognise a PAC domain in the interval 421–473 (FVGEVSAHTRAGSSMTFHAVKVPLRDDRGQVTGICGIARDITDIKEAGVELLK). Residues 674–886 (TVSHDLRSPL…TCVLFTLPTP (213 aa)) form the Histidine kinase domain. A Phosphohistidine; by autocatalysis modification is found at H677.

Post-translationally, autophosphorylated.

Its subcellular location is the cell membrane. The enzyme catalyses ATP + protein L-histidine = ADP + protein N-phospho-L-histidine.. Member of the two-component regulatory system FilI/FilRs, which is involved in the regulation of methanogenesis. Autophosphorylates and specifically transfers the phosphoryl group to both FilR1 and FilR2. Functionally, could also catalyze the synthesis of the quorum sensing (QS) signal molecules carboxyl-acyl homoserine lactones (AHLs), which regulate the transition of the cellular morphology from short cells to filaments and of the carbon metabolic flux from biomass formation to methane production. This chain is Methanogenesis regulatory histidine kinase FilI, found in Methanothrix harundinacea (strain 6Ac) (Methanosaeta harundinacea).